Consider the following 333-residue polypeptide: B3 domain-containing transcription factor NGA4 (333 aa).

Positions 36–145 (FDKVLTPSDV…KIMFIDWRPR (110 aa)) form a DNA-binding region, TF-B3. A disordered region spans residues 268–333 (VEESSSSGDT…YKRKGKSLEL (66 aa)). Over residues 323–333 (EYKRKGKSLEL) the composition is skewed to basic and acidic residues.

Its subcellular location is the nucleus. Regulates lateral organ growth. Functionally redundant with NGA1, NGA2 and NGA3. In Arabidopsis thaliana (Mouse-ear cress), this protein is B3 domain-containing transcription factor NGA4 (NGA4).